A 147-amino-acid chain; its full sequence is Large ribosomal subunit protein uL13 (147 aa).

Belongs to the universal ribosomal protein uL13 family. As to quaternary structure, part of the 50S ribosomal subunit.

This protein is one of the early assembly proteins of the 50S ribosomal subunit, although it is not seen to bind rRNA by itself. It is important during the early stages of 50S assembly. The chain is Large ribosomal subunit protein uL13 from Ligilactobacillus salivarius (strain UCC118) (Lactobacillus salivarius).